We begin with the raw amino-acid sequence, 111 residues long: uncharacterized protein (111 aa).

The protein belongs to the asfivirus E111R family.

This is an uncharacterized protein from African swine fever virus (isolate Pig/Kenya/KEN-50/1950) (ASFV).